A 202-amino-acid chain; its full sequence is Protein EMBRYO DEFECTIVE 514 (202 aa).

Disordered stretches follow at residues 1 to 69 (MAEE…PVKL) and 168 to 202 (MKTPGANGNGHGGGRGGGGGRRGGRGGGRGGRFRR). A2 is subject to N-acetylalanine. Composition is skewed to basic and acidic residues over residues 33–42 (ETGDEKRERE) and 51–65 (GESKKQKVGEEEKSG). The segment covering 174–202 (NGNGHGGGRGGGGGRRGGRGGGRGGRFRR) has biased composition (gly residues).

As to expression, expressed in leaves, flowers and embryos at globular stage.

It localises to the nucleus. Its function is as follows. May play a role in ribosome biogenesis and in determining the rate of cell division. Involved in a process essential for nuclear and nucleolar functions. The sequence is that of Protein EMBRYO DEFECTIVE 514 from Arabidopsis thaliana (Mouse-ear cress).